The chain runs to 452 residues: 5'-nucleotidase domain-containing protein 1 (452 aa).

The active-site Nucleophile is D16. Mg(2+) contacts are provided by D16 and D18. The active-site Proton donor is D18. K171 bears the N6-acetyllysine mark. Residue D313 coordinates Mg(2+). The segment covering 339–361 (GDKDGKPEESEPEEKKGKYEGSK) has biased composition (basic and acidic residues). The segment at 339-365 (GDKDGKPEESEPEEKKGKYEGSKAKPL) is disordered.

Belongs to the 5'(3')-deoxyribonucleotidase family.

In Bos taurus (Bovine), this protein is 5'-nucleotidase domain-containing protein 1 (NT5DC1).